We begin with the raw amino-acid sequence, 157 residues long: 2-C-methyl-D-erythritol 2,4-cyclodiphosphate synthase (157 aa).

A divalent metal cation contacts are provided by D9 and H11. 4-CDP-2-C-methyl-D-erythritol 2-phosphate is bound by residues 9 to 11 and 35 to 36; these read DVH and HS. An a divalent metal cation-binding site is contributed by H43. 4-CDP-2-C-methyl-D-erythritol 2-phosphate-binding positions include 57–59, 62–66, 101–107, 133–136, F140, and R143; these read DIG, FPDTD, AQKPKMA, and TTTE.

It belongs to the IspF family. As to quaternary structure, homotrimer. It depends on a divalent metal cation as a cofactor.

It catalyses the reaction 4-CDP-2-C-methyl-D-erythritol 2-phosphate = 2-C-methyl-D-erythritol 2,4-cyclic diphosphate + CMP. The protein operates within isoprenoid biosynthesis; isopentenyl diphosphate biosynthesis via DXP pathway; isopentenyl diphosphate from 1-deoxy-D-xylulose 5-phosphate: step 4/6. Functionally, involved in the biosynthesis of isopentenyl diphosphate (IPP) and dimethylallyl diphosphate (DMAPP), two major building blocks of isoprenoid compounds. Catalyzes the conversion of 4-diphosphocytidyl-2-C-methyl-D-erythritol 2-phosphate (CDP-ME2P) to 2-C-methyl-D-erythritol 2,4-cyclodiphosphate (ME-CPP) with a corresponding release of cytidine 5-monophosphate (CMP). The chain is 2-C-methyl-D-erythritol 2,4-cyclodiphosphate synthase from Halalkalibacterium halodurans (strain ATCC BAA-125 / DSM 18197 / FERM 7344 / JCM 9153 / C-125) (Bacillus halodurans).